A 527-amino-acid polypeptide reads, in one-letter code: Catalase (527 aa).

Residues 1 to 22 (MADSRDPASDQMKQWKEQRAPQ) are compositionally biased toward basic and acidic residues. A disordered region spans residues 1–34 (MADSRDPASDQMKQWKEQRAPQKPDVLTTGGGNP). Ala2 is modified (N-acetylalanine). At Ser9 the chain carries Phosphoserine. An N6-succinyllysine modification is found at Lys13. Catalysis depends on residues His75 and Asn148. 4 residues coordinate NADP(+): His194, Ser201, Arg203, and Asn213. Lys221 is subject to N6-succinyllysine. Position 233 is an N6-acetyllysine (Lys233). 4 residues coordinate NADP(+): Lys237, Trp303, His305, and Lys306. Position 306 is an N6-acetyllysine; alternate (Lys306). An N6-succinyllysine; alternate modification is found at Lys306. Position 358 (Tyr358) interacts with heme. Ser417 and Ser434 each carry phosphoserine. An N6-acetyllysine; alternate mark is found at Lys449 and Lys480. An N6-succinyllysine; alternate mark is found at Lys449 and Lys480. Thr511 bears the Phosphothreonine mark. Ser517 is subject to Phosphoserine. The residue at position 522 (Lys522) is an N6-succinyllysine. The Microbody targeting signal; atypical motif lies at 524–527 (KANL).

The protein belongs to the catalase family. Homotetramer. Interacts (via microbody targeting signal) with PEX5, monomeric form interacts with PEX5, leading to its translocation into peroxisomes. Heme serves as cofactor. It depends on NADP(+) as a cofactor. In terms of tissue distribution, expressed in renal proximal tubules (at protein level).

Its subcellular location is the peroxisome matrix. The catalysed reaction is 2 H2O2 = O2 + 2 H2O. Catalyzes the degradation of hydrogen peroxide (H(2)O(2)) generated by peroxisomal oxidases to water and oxygen, thereby protecting cells from the toxic effects of hydrogen peroxide. Promotes growth of cells including T-cells, B-cells, myeloid leukemia cells, melanoma cells, mastocytoma cells and normal and transformed fibroblast cells. This is Catalase (Cat) from Rattus norvegicus (Rat).